The sequence spans 426 residues: Glutamate-1-semialdehyde 2,1-aminomutase (426 aa).

The residue at position 265 (Lys265) is an N6-(pyridoxal phosphate)lysine.

The protein belongs to the class-III pyridoxal-phosphate-dependent aminotransferase family. HemL subfamily. In terms of assembly, homodimer. Pyridoxal 5'-phosphate is required as a cofactor.

The protein localises to the cytoplasm. It carries out the reaction (S)-4-amino-5-oxopentanoate = 5-aminolevulinate. The protein operates within porphyrin-containing compound metabolism; protoporphyrin-IX biosynthesis; 5-aminolevulinate from L-glutamyl-tRNA(Glu): step 2/2. The chain is Glutamate-1-semialdehyde 2,1-aminomutase (hemL) from Salmonella typhimurium (strain SL1344).